Reading from the N-terminus, the 210-residue chain is 3-hexulose-6-phosphate synthase (210 aa).

It belongs to the HPS/KGPDC family. HPS subfamily.

It catalyses the reaction D-ribulose 5-phosphate + formaldehyde = D-arabino-hex-3-ulose 6-phosphate. Its pathway is one-carbon metabolism; formaldehyde assimilation via RuMP pathway; D-fructose 6-phosphate from D-ribulose 5-phosphate and formaldehyde: step 1/2. In terms of biological role, catalyzes the condensation of ribulose 5-phosphate with formaldehyde to form 3-hexulose 6-phosphate. Together with HxlB, may act as a formaldehyde detoxification system. The chain is 3-hexulose-6-phosphate synthase (hxlA) from Bacillus subtilis (strain 168).